The chain runs to 166 residues: Regulatory protein RecX (166 aa).

Belongs to the RecX family.

It is found in the cytoplasm. Modulates RecA activity. This chain is Regulatory protein RecX, found in Salmonella newport (strain SL254).